A 399-amino-acid polypeptide reads, in one-letter code: Paraneoplastic antigen-like protein 6A (399 aa).

The protein belongs to the PNMA family. As to expression, expressed in the brain.

This chain is Paraneoplastic antigen-like protein 6A, found in Homo sapiens (Human).